We begin with the raw amino-acid sequence, 276 residues long: ATP synthase subunit delta (276 aa).

The protein belongs to the ATPase delta chain family. As to quaternary structure, F-type ATPases have 2 components, F(1) - the catalytic core - and F(0) - the membrane proton channel. F(1) has five subunits: alpha(3), beta(3), gamma(1), delta(1), epsilon(1). F(0) has three main subunits: a(1), b(2) and c(10-14). The alpha and beta chains form an alternating ring which encloses part of the gamma chain. F(1) is attached to F(0) by a central stalk formed by the gamma and epsilon chains, while a peripheral stalk is formed by the delta and b chains.

Its subcellular location is the cell membrane. F(1)F(0) ATP synthase produces ATP from ADP in the presence of a proton or sodium gradient. F-type ATPases consist of two structural domains, F(1) containing the extramembraneous catalytic core and F(0) containing the membrane proton channel, linked together by a central stalk and a peripheral stalk. During catalysis, ATP synthesis in the catalytic domain of F(1) is coupled via a rotary mechanism of the central stalk subunits to proton translocation. Functionally, this protein is part of the stalk that links CF(0) to CF(1). It either transmits conformational changes from CF(0) to CF(1) or is implicated in proton conduction. This Frankia casuarinae (strain DSM 45818 / CECT 9043 / HFP020203 / CcI3) protein is ATP synthase subunit delta.